The sequence spans 61 residues: uncharacterized protein (61 aa).

2 helical membrane passes run 5 to 25 (MLYF…SLLL) and 29 to 49 (YILT…PWYT).

The protein resides in the membrane. This is an uncharacterized protein from Saccharomyces cerevisiae (strain ATCC 204508 / S288c) (Baker's yeast).